We begin with the raw amino-acid sequence, 614 residues long: UvrABC system protein C (614 aa).

In terms of domain architecture, GIY-YIG spans 19-97; it reads SLPGCYLWKN…IKKYNPKFNV (79 aa). The 36-residue stretch at 208 to 243 folds into the UVR domain; the sequence is ERLVADLKKAMMDASSKMEYERAGFLKQRIEKINQL.

The protein belongs to the UvrC family. In terms of assembly, interacts with UvrB in an incision complex.

The protein resides in the cytoplasm. Functionally, the UvrABC repair system catalyzes the recognition and processing of DNA lesions. UvrC both incises the 5' and 3' sides of the lesion. The N-terminal half is responsible for the 3' incision and the C-terminal half is responsible for the 5' incision. The chain is UvrABC system protein C from Leptospira biflexa serovar Patoc (strain Patoc 1 / Ames).